The sequence spans 206 residues: Outer-membrane lipoprotein carrier protein (206 aa).

Residues 1–20 form the signal peptide; sequence MFYLIKKLPKFILFSLYLYA.

Belongs to the LolA family. As to quaternary structure, monomer.

Its subcellular location is the periplasm. In terms of biological role, participates in the translocation of lipoproteins from the inner membrane to the outer membrane. Only forms a complex with a lipoprotein if the residue after the N-terminal Cys is not an aspartate (The Asp acts as a targeting signal to indicate that the lipoprotein should stay in the inner membrane). In Wigglesworthia glossinidia brevipalpis, this protein is Outer-membrane lipoprotein carrier protein.